Here is a 203-residue protein sequence, read N- to C-terminus: Thymidylate kinase (203 aa).

10–17 (GIDGCGKT) is an ATP binding site.

Belongs to the thymidylate kinase family.

It carries out the reaction dTMP + ATP = dTDP + ADP. Phosphorylation of dTMP to form dTDP in both de novo and salvage pathways of dTTP synthesis. The chain is Thymidylate kinase from Thermoanaerobacter pseudethanolicus (strain ATCC 33223 / 39E) (Clostridium thermohydrosulfuricum).